We begin with the raw amino-acid sequence, 1085 residues long: DNA repair and recombination protein RAD26 (1085 aa).

Residue Ser-30 is modified to Phosphoserine. Disordered stretches follow at residues Lys-118–Glu-141 and Asn-190–Asp-219. The span at Lys-128–Glu-141 shows a compositional bias: basic and acidic residues. Over residues Ser-210–Asp-219 the composition is skewed to acidic residues. The 210-residue stretch at Tyr-309–Gly-518 folds into the Helicase ATP-binding domain. Asp-322–Thr-329 contributes to the ATP binding site. The short motif at Asp-469–His-472 is the DEGH box element. One can recognise a Helicase C-terminal domain in the interval Val-655–His-818.

It belongs to the SNF2/RAD54 helicase family.

It localises to the nucleus. The enzyme catalyses ATP + H2O = ADP + phosphate + H(+). May be involved in the preferential repair of active genes. The polypeptide is DNA repair and recombination protein RAD26 (RAD26) (Saccharomyces cerevisiae (strain ATCC 204508 / S288c) (Baker's yeast)).